Reading from the N-terminus, the 370-residue chain is Death-associated protein kinase 2 (370 aa).

Residues 23–285 (YDIGEELGSG…IQEALRHPWI (263 aa)) enclose the Protein kinase domain. ATP is bound by residues 29–37 (LGSGQFAIV) and Lys52. Catalysis depends on Asp149, which acts as the Proton acceptor. The segment at 287–354 (PVDTQQAMVR…RNCESDTEEN (68 aa)) is calmodulin-binding. Residues 292-301 (QAMVRRESVV) form an autoinhibitory domain region. Ser299 is modified (phosphoserine). Ser318 carries the post-translational modification Phosphoserine; by autocatalysis. Ser349 is subject to Phosphoserine. Phosphothreonine is present on Thr369.

The protein belongs to the protein kinase superfamily. CAMK Ser/Thr protein kinase family. DAP kinase subfamily. Homodimer in its autoinhibited state. Active as monomer. Interacts with 14-3-3 proteins YWHAB, YWHAE, YWHAG, YWHAH, YWHAQ, YWHAZ and SFN; the interaction requires DAPK2 phosphorylation at Thr-369 and suppresses DAPK2 kinase activity and DAPK2-induced apoptosis. Mg(2+) serves as cofactor. Autophosphorylation at Ser-318 inhibits its catalytic activity. Dephosphorylated at Ser-318 in response to activated Fas and TNF-alpha receptors. As to expression, expressed in peritubular interstitial cells of the renal cortex. Isoform 1 is found in the adult brain while isoform 2 is expressed in brains of embryos and young mice (at protein level).

It is found in the cytoplasm. The protein localises to the cytoplasmic vesicle. The protein resides in the autophagosome lumen. It carries out the reaction L-seryl-[protein] + ATP = O-phospho-L-seryl-[protein] + ADP + H(+). The catalysed reaction is L-threonyl-[protein] + ATP = O-phospho-L-threonyl-[protein] + ADP + H(+). With respect to regulation, activated by Ca(2+)/calmodulin. Regulated by a double locking mechanism, involving autophosphorylation at Ser-318, calmodulin binding, and dimerization. In the inactive state, Ser-318 is phosphorylated, and the kinase is dimeric. Activation involves: dephosphorylation at Ser-318, release-of-autoinhibition mechanism where calmodulin binding induces a conformational change that relieves the steric block of the active site by the autoinhibitory domain, and generation of the monomeric active form of the kinase. Its function is as follows. Calcium/calmodulin-dependent serine/threonine kinase involved in multiple cellular signaling pathways that trigger cell survival, apoptosis, and autophagy. Capable of regulating both type I apoptotic and type II autophagic cell death signals. The former involves caspase activation, chromatin and mitochondrial condensation while the latter involves caspase-independent cell death in conjunction with accumulation of mature autophagic vesicles, plasma membrane blebs, and nuclear condensation without DNA degradation. Mediator of anoikis and a suppressor of beta-catenin-dependent anchorage-independent growth of malignant epithelial cells. May play a role in granulocytic maturation. Regulates granulocytes motility by controlling cell spreading and polarization. The sequence is that of Death-associated protein kinase 2 (Dapk2) from Mus musculus (Mouse).